The following is a 363-amino-acid chain: Thioredoxin domain-containing protein C13F5.05, mitochondrial (363 aa).

The transit peptide at 1 to 24 directs the protein to the mitochondrion; it reads MLFRIPTLFTLFLACFSLVSGVFG. A Thioredoxin domain is found at 32-141; that stretch reads NTIELNSKNF…KSLQKFVSDS (110 aa).

Its subcellular location is the mitochondrion. This Schizosaccharomyces pombe (strain 972 / ATCC 24843) (Fission yeast) protein is Thioredoxin domain-containing protein C13F5.05, mitochondrial.